A 1220-amino-acid polypeptide reads, in one-letter code: von Willebrand factor A domain-containing protein 5B1 (1220 aa).

Positions 1-18 are cleaved as a signal peptide; sequence MPGLLNWITGAALPLTAS. Positions 19–149 constitute a VIT domain; the sequence is DVTSCVSGYA…NVTIFISTSS (131 aa). N140 carries N-linked (GlcNAc...) asparagine glycosylation. In terms of domain architecture, VWFA spans 361-529; the sequence is EFIFLIDRSS…RLQPKMVKSL (169 aa). An N-linked (GlcNAc...) asparagine glycan is attached at N650. Residues 715-807 form a disordered region; sequence NSGQDLNQGP…SPSRPATPAP (93 aa). Basic and acidic residues predominate over residues 757–774; it reads VRERTSDSRSPGDLEPSH. The span at 796–807 shows a compositional bias: low complexity; the sequence is RASPSRPATPAP. Y881 is modified (phosphotyrosine). Disordered regions lie at residues 937–962 and 976–995; these read RGTS…GKFQ and EARS…QRSL. N1017 carries N-linked (GlcNAc...) asparagine glycosylation. The segment covering 1093–1111 has biased composition (polar residues); the sequence is TTRPSESKTPSPQLCTSSP. A disordered region spans residues 1093 to 1115; it reads TTRPSESKTPSPQLCTSSPPRHP.

Its subcellular location is the secreted. This Homo sapiens (Human) protein is von Willebrand factor A domain-containing protein 5B1 (VWA5B1).